Consider the following 454-residue polypeptide: Phenylalanine--tRNA ligase, mitochondrial (454 aa).

Residues 141-144 (SAHQ), R163, 170-172 (VHY), 177-179 (QME), E266, and F291 each bind substrate. The tract at residues 327 to 347 (KSISTSSSSSSSSSSSSSSTL) is disordered. Positions 328-347 (SISTSSSSSSSSSSSSSSTL) are enriched in low complexity. The FDX-ACB domain maps to 361 to 454 (SKYPSCFKDV…LENHLSVKLR (94 aa)).

The protein belongs to the class-II aminoacyl-tRNA synthetase family. As to quaternary structure, monomer.

It is found in the mitochondrion matrix. The catalysed reaction is tRNA(Phe) + L-phenylalanine + ATP = L-phenylalanyl-tRNA(Phe) + AMP + diphosphate + H(+). In terms of biological role, is responsible for the charging of tRNA(Phe) with phenylalanine in mitochondrial translation. The polypeptide is Phenylalanine--tRNA ligase, mitochondrial (mpheS) (Dictyostelium discoideum (Social amoeba)).